Here is a 408-residue protein sequence, read N- to C-terminus: tRNA-specific 2-thiouridylase MnmA (408 aa).

Residues 27 to 34 (AMSGGVDS) and Leu-53 each bind ATP. Cys-121 serves as the catalytic Nucleophile. Cysteines 121 and 222 form a disulfide. Gly-145 contributes to the ATP binding site. The tract at residues 172–174 (RDQ) is interaction with tRNA. Cys-222 acts as the Cysteine persulfide intermediate in catalysis.

The protein belongs to the MnmA/TRMU family.

Its subcellular location is the cytoplasm. It carries out the reaction S-sulfanyl-L-cysteinyl-[protein] + uridine(34) in tRNA + AH2 + ATP = 2-thiouridine(34) in tRNA + L-cysteinyl-[protein] + A + AMP + diphosphate + H(+). Functionally, catalyzes the 2-thiolation of uridine at the wobble position (U34) of tRNA, leading to the formation of s(2)U34. The polypeptide is tRNA-specific 2-thiouridylase MnmA (Rhizobium etli (strain CIAT 652)).